A 512-amino-acid polypeptide reads, in one-letter code: GMP synthase [glutamine-hydrolyzing] (512 aa).

A Glutamine amidotransferase type-1 domain is found at 6 to 195 (KIIILDFGSQ…VFNICGCQPK (190 aa)). The active-site Nucleophile is Cys83. Residues His169 and Glu171 contribute to the active site. Residues 196–387 (WKITEFISAA…LGIDFKFVYK (192 aa)) enclose the GMPS ATP-PPase domain. Residue 223–229 (SGGVDSS) coordinates ATP.

Homodimer.

The catalysed reaction is XMP + L-glutamine + ATP + H2O = GMP + L-glutamate + AMP + diphosphate + 2 H(+). The protein operates within purine metabolism; GMP biosynthesis; GMP from XMP (L-Gln route): step 1/1. Catalyzes the synthesis of GMP from XMP. In Spiroplasma kunkelii, this protein is GMP synthase [glutamine-hydrolyzing].